A 639-amino-acid chain; its full sequence is tRNA uridine 5-carboxymethylaminomethyl modification enzyme MnmG (639 aa).

FAD is bound by residues 13-18, V125, and S180; that span reads GGGHAG. 273-287 is a binding site for NAD(+); that stretch reads GPRYCPSIEDKVVRF. FAD is bound at residue Q370. The segment at 620 to 639 is disordered; the sequence is KRQGGNGPQSPRPDDGRARA.

This sequence belongs to the MnmG family. In terms of assembly, homodimer. Heterotetramer of two MnmE and two MnmG subunits. Requires FAD as cofactor.

It localises to the cytoplasm. Its function is as follows. NAD-binding protein involved in the addition of a carboxymethylaminomethyl (cmnm) group at the wobble position (U34) of certain tRNAs, forming tRNA-cmnm(5)s(2)U34. This is tRNA uridine 5-carboxymethylaminomethyl modification enzyme MnmG from Thioalkalivibrio sulfidiphilus (strain HL-EbGR7).